The primary structure comprises 307 residues: Small ribosomal subunit protein uS2 (307 aa).

The tract at residues 256–307 is disordered; that stretch reads GGEAEQAAVDATGGAATEETPAAESTGAASEAAAVSEAAEPATEQPAADAEA. A compositionally biased stretch (low complexity) spans 259–307; that stretch reads AEQAAVDATGGAATEETPAAESTGAASEAAAVSEAAEPATEQPAADAEA.

This sequence belongs to the universal ribosomal protein uS2 family.

In Nocardioides sp. (strain ATCC BAA-499 / JS614), this protein is Small ribosomal subunit protein uS2.